Reading from the N-terminus, the 351-residue chain is Nicotinate-nucleotide--dimethylbenzimidazole phosphoribosyltransferase (351 aa).

E317 (proton acceptor) is an active-site residue.

This sequence belongs to the CobT family.

The catalysed reaction is 5,6-dimethylbenzimidazole + nicotinate beta-D-ribonucleotide = alpha-ribazole 5'-phosphate + nicotinate + H(+). Its pathway is nucleoside biosynthesis; alpha-ribazole biosynthesis; alpha-ribazole from 5,6-dimethylbenzimidazole: step 1/2. Catalyzes the synthesis of alpha-ribazole-5'-phosphate from nicotinate mononucleotide (NAMN) and 5,6-dimethylbenzimidazole (DMB). In Pseudomonas fluorescens (strain ATCC BAA-477 / NRRL B-23932 / Pf-5), this protein is Nicotinate-nucleotide--dimethylbenzimidazole phosphoribosyltransferase.